Reading from the N-terminus, the 274-residue chain is Formamidopyrimidine-DNA glycosylase (274 aa).

Pro-2 serves as the catalytic Schiff-base intermediate with DNA. The active-site Proton donor is Glu-3. Lys-56 (proton donor; for beta-elimination activity) is an active-site residue. DNA-binding residues include His-89, Arg-107, and Lys-148. The FPG-type zinc finger occupies 233–267 (LAYGRAREMCVNCETTLENLKLGQRASVFCPQCQP). Arg-257 (proton donor; for delta-elimination activity) is an active-site residue.

This sequence belongs to the FPG family. Monomer. Requires Zn(2+) as cofactor.

The enzyme catalyses Hydrolysis of DNA containing ring-opened 7-methylguanine residues, releasing 2,6-diamino-4-hydroxy-5-(N-methyl)formamidopyrimidine.. The catalysed reaction is 2'-deoxyribonucleotide-(2'-deoxyribose 5'-phosphate)-2'-deoxyribonucleotide-DNA = a 3'-end 2'-deoxyribonucleotide-(2,3-dehydro-2,3-deoxyribose 5'-phosphate)-DNA + a 5'-end 5'-phospho-2'-deoxyribonucleoside-DNA + H(+). Functionally, involved in base excision repair of DNA damaged by oxidation or by mutagenic agents. Acts as a DNA glycosylase that recognizes and removes damaged bases. Has a preference for oxidized purines, such as 7,8-dihydro-8-oxoguanine (8-oxoG). Has AP (apurinic/apyrimidinic) lyase activity and introduces nicks in the DNA strand. Cleaves the DNA backbone by beta-delta elimination to generate a single-strand break at the site of the removed base with both 3'- and 5'-phosphates. The protein is Formamidopyrimidine-DNA glycosylase of Acinetobacter baumannii (strain SDF).